Reading from the N-terminus, the 264-residue chain is Small ribosomal subunit protein eS1 (264 aa).

The segment at 232–264 (HGEGGGSGKPSGDETGAKVERADGYEPPVQESV) is disordered. Positions 242–255 (SGDETGAKVERADG) are enriched in basic and acidic residues.

It belongs to the eukaryotic ribosomal protein eS1 family. Component of the small ribosomal subunit. Mature ribosomes consist of a small (40S) and a large (60S) subunit. The 40S subunit contains about 33 different proteins and 1 molecule of RNA (18S). The 60S subunit contains about 49 different proteins and 3 molecules of RNA (28S, 5.8S and 5S). Part of the small subunit (SSU) processome, composed of more than 70 proteins and the RNA chaperone small nucleolar RNA (snoRNA) U3.

It is found in the cytoplasm. It localises to the nucleus. The protein resides in the nucleolus. Its function is as follows. Component of the small ribosomal subunit. The ribosome is a large ribonucleoprotein complex responsible for the synthesis of proteins in the cell. Part of the small subunit (SSU) processome, first precursor of the small eukaryotic ribosomal subunit. During the assembly of the SSU processome in the nucleolus, many ribosome biogenesis factors, an RNA chaperone and ribosomal proteins associate with the nascent pre-rRNA and work in concert to generate RNA folding, modifications, rearrangements and cleavage as well as targeted degradation of pre-ribosomal RNA by the RNA exosome. May play a role during erythropoiesis. This Ophiophagus hannah (King cobra) protein is Small ribosomal subunit protein eS1.